Consider the following 361-residue polypeptide: Ribosomal RNA large subunit methyltransferase M (361 aa).

S-adenosyl-L-methionine-binding positions include Ser-187, 220–223, Asp-239, Asp-259, and Asp-276; that span reads CPGG. The active-site Proton acceptor is Lys-305.

This sequence belongs to the class I-like SAM-binding methyltransferase superfamily. RNA methyltransferase RlmE family. RlmM subfamily. As to quaternary structure, monomer.

The protein resides in the cytoplasm. It carries out the reaction cytidine(2498) in 23S rRNA + S-adenosyl-L-methionine = 2'-O-methylcytidine(2498) in 23S rRNA + S-adenosyl-L-homocysteine + H(+). Its function is as follows. Catalyzes the 2'-O-methylation at nucleotide C2498 in 23S rRNA. This is Ribosomal RNA large subunit methyltransferase M from Shewanella baltica (strain OS223).